A 126-amino-acid polypeptide reads, in one-letter code: 13 kDa ribonucleoprotein-associated protein (126 aa).

Belongs to the eukaryotic ribosomal protein eL8 family. Component of the U3 snoRNP particle. Binds to the C'/D and B/C motifs in U3 snoRNA. Component of the 25S U4/U6.U5 tri-snRNP particle, a subcomplex of the spliceosome. Binds to the 5' stem-loop of U4 snRNA.

Its subcellular location is the nucleus. It is found in the nucleolus. Its function is as follows. Common component of the spliceosome and rRNA processing machinery. In association with the spliceosomal U4/U6.U5 tri-snRNP particle, required for splicing of pre-mRNA. In association with box C/D snoRNPs, required for processing of pre-ribosomal RNA (rRNA) and site-specific 2'-O-methylation of substrate RNAs. Essential for the accumulation and stability of U4 snRNA, U6 snRNA, and box C/D snoRNAs. In Kluyveromyces lactis (strain ATCC 8585 / CBS 2359 / DSM 70799 / NBRC 1267 / NRRL Y-1140 / WM37) (Yeast), this protein is 13 kDa ribonucleoprotein-associated protein (SNU13).